We begin with the raw amino-acid sequence, 398 residues long: tRNA(Ile)-lysidine synthase (398 aa).

25–30 (SGGVDS) contributes to the ATP binding site.

This sequence belongs to the tRNA(Ile)-lysidine synthase family.

The protein resides in the cytoplasm. It catalyses the reaction cytidine(34) in tRNA(Ile2) + L-lysine + ATP = lysidine(34) in tRNA(Ile2) + AMP + diphosphate + H(+). Its function is as follows. Ligates lysine onto the cytidine present at position 34 of the AUA codon-specific tRNA(Ile) that contains the anticodon CAU, in an ATP-dependent manner. Cytidine is converted to lysidine, thus changing the amino acid specificity of the tRNA from methionine to isoleucine. The chain is tRNA(Ile)-lysidine synthase from Francisella tularensis subsp. holarctica (strain OSU18).